The following is a 711-amino-acid chain: Consortin (711 aa).

5 disordered regions span residues 1–157 (MDDS…NDPP), 294–332 (AVGT…GCHQ), 370–389 (ETAG…KDSS), 394–432 (PPTE…PGLI), and 457–496 (PRDQ…ESAL). Residues 1–650 (MDDSDPPTYS…LEQDEVGGGS (650 aa)) lie on the Cytoplasmic side of the membrane. Residues 63–77 (VSEQDSLNNNESFPS) show a composition bias toward polar residues. The span at 109 to 120 (PAKRSPRAKKSS) shows a compositional bias: basic residues. 2 stretches are compositionally biased toward basic and acidic residues: residues 396 to 407 (TEDHCGVARDPK) and 457 to 471 (PRDQ…EPRQ). The span at 478 to 487 (DGKSAQSQAG) shows a compositional bias: polar residues. Residues 651 to 671 (CILLILLCIATVFLSVGGTAL) traverse the membrane as a helical segment. The Extracellular segment spans residues 672–711 (YCTLGNIESPVCTDFADNVDFYYTKLLQGVAGLKHWVYLS).

It belongs to the CNST family. As to quaternary structure, interacts with connexins GJA1/CX43, GJB1/CX32, GJB2/CX26, GJB3/CX31, GJB6/CX30 and GJC1/CX45. Also interacts with GGA1 and GGA2. Does not interact with PANX1.

The protein resides in the cell membrane. Its subcellular location is the golgi apparatus. It is found in the trans-Golgi network membrane. The protein localises to the cytoplasmic vesicle. It localises to the secretory vesicle. Its function is as follows. Required for targeting of connexins to the plasma membrane. This Mus musculus (Mouse) protein is Consortin (Cnst).